Reading from the N-terminus, the 165-residue chain is Crossover junction endodeoxyribonuclease RuvC (165 aa).

Residues Asp6, Glu67, and Asp142 contribute to the active site. The Mg(2+) site is built by Asp6, Glu67, and Asp142.

It belongs to the RuvC family. As to quaternary structure, homodimer which binds Holliday junction (HJ) DNA. The HJ becomes 2-fold symmetrical on binding to RuvC with unstacked arms; it has a different conformation from HJ DNA in complex with RuvA. In the full resolvosome a probable DNA-RuvA(4)-RuvB(12)-RuvC(2) complex forms which resolves the HJ. Requires Mg(2+) as cofactor.

The protein localises to the cytoplasm. It catalyses the reaction Endonucleolytic cleavage at a junction such as a reciprocal single-stranded crossover between two homologous DNA duplexes (Holliday junction).. The RuvA-RuvB-RuvC complex processes Holliday junction (HJ) DNA during genetic recombination and DNA repair. Endonuclease that resolves HJ intermediates. Cleaves cruciform DNA by making single-stranded nicks across the HJ at symmetrical positions within the homologous arms, yielding a 5'-phosphate and a 3'-hydroxyl group; requires a central core of homology in the junction. The consensus cleavage sequence is 5'-(A/T)TT(C/G)-3'. Cleavage occurs on the 3'-side of the TT dinucleotide at the point of strand exchange. HJ branch migration catalyzed by RuvA-RuvB allows RuvC to scan DNA until it finds its consensus sequence, where it cleaves and resolves the cruciform DNA. This chain is Crossover junction endodeoxyribonuclease RuvC, found in Chlamydia abortus (strain DSM 27085 / S26/3) (Chlamydophila abortus).